Reading from the N-terminus, the 175-residue chain is Alpha-crystallin B chain (175 aa).

M1 is modified (N-acetylmethionine). S19 bears the Phosphoserine mark. Residue S41 is glycosylated (O-linked (GlcNAc) serine). Phosphoserine occurs at positions 45 and 59. One can recognise a sHSP domain in the interval 56–164 (RAPSWIDTGL…PERTIPITRE (109 aa)). Zn(2+) is bound at residue H83. Residue K92 is modified to N6-acetyllysine. The Zn(2+) site is built by H104, E106, H111, and H119. Residues 139-175 (SDGVLTMNGPRKQASGPERTIPITREEKPAVTAAPKK) form a disordered region. K166 is subject to N6-acetyllysine. Residue T170 is glycosylated (O-linked (GlcNAc) threonine).

Belongs to the small heat shock protein (HSP20) family. In terms of assembly, heteromer composed of three CRYAA and one CRYAB subunits. Aggregates with homologous proteins, including the small heat shock protein HSPB1, to form large heteromeric complexes. Inter-subunit bridging via zinc ions enhances stability, which is crucial as there is no protein turn over in the lens. Interacts with HSPBAP1 and TTN/titin. Interacts with TMEM109; in the cellular response to DNA damage. Interacts with DES; binds rapidly during early stages of DES filament assembly and a reduced binding seen in the later stages. Interacts with ATP6V1A and with MTOR, forming a ternary complex.

It localises to the cytoplasm. It is found in the nucleus. Its subcellular location is the secreted. The protein resides in the lysosome. In terms of biological role, may contribute to the transparency and refractive index of the lens. Has chaperone-like activity, preventing aggregation of various proteins under a wide range of stress conditions. In lens epithelial cells, stabilizes the ATP6V1A protein, preventing its degradation by the proteasome. This Ovis aries (Sheep) protein is Alpha-crystallin B chain (CRYAB).